Here is a 136-residue protein sequence, read N- to C-terminus: Basic phospholipase A2 Tgc-K49 (136 aa).

A signal peptide spans 1-15; it reads MRTLWIVAVLLVGEG. Disulfide bonds link C41-C130, C43-C59, C58-C110, C64-C136, C65-C103, C72-C96, and C90-C101. H62 is a catalytic residue. The active site involves D104.

It belongs to the phospholipase A2 family. Group II subfamily. K49 sub-subfamily. As to expression, expressed by the venom gland.

The protein resides in the secreted. The enzyme catalyses a 1,2-diacyl-sn-glycero-3-phosphocholine + H2O = a 1-acyl-sn-glycero-3-phosphocholine + a fatty acid + H(+). In terms of biological role, PLA2 catalyzes the calcium-dependent hydrolysis of the 2-acyl groups in 3-sn-phosphoglycerides. The protein is Basic phospholipase A2 Tgc-K49 of Trimeresurus gracilis (Kikuchi habu).